A 202-amino-acid chain; its full sequence is Nascent polypeptide-associated complex subunit alpha (202 aa).

Residues 1 to 19 (MADPRVEELPDEEVPKTNV) are compositionally biased toward basic and acidic residues. The disordered stretch occupies residues 1–42 (MADPRVEELPDEEVPKTNVEDAGSSSESEAGDEPTIPGGAAV). The NAC-A/B domain maps to 46-111 (SRNEKKARKA…AKIEDLNATA (66 aa)). Low complexity predominate over residues 117 to 126 (QQLAEAAANE). The disordered stretch occupies residues 117–165 (QQLAEAAANEHAGHDHEHDHGKGKAPEAEAKKEEEEDDGEEVDESGLEA). Residues 127–149 (HAGHDHEHDHGKGKAPEAEAKKE) show a composition bias toward basic and acidic residues. Residues 150 to 162 (EEEDDGEEVDESG) are compositionally biased toward acidic residues. The 40-residue stretch at 163–202 (LEAKDIELVMAQANVSRKKAVKALRENDNDIVNSIMALSI) folds into the UBA domain.

The protein belongs to the NAC-alpha family. Part of the nascent polypeptide-associated complex (NAC), consisting of egd2 and egd1. NAC associates with ribosomes via egd1.

It localises to the cytoplasm. It is found in the nucleus. In terms of biological role, component of the nascent polypeptide-associated complex (NAC), a dynamic component of the ribosomal exit tunnel, protecting the emerging polypeptides from interaction with other cytoplasmic proteins to ensure appropriate nascent protein targeting. The NAC complex also promotes mitochondrial protein import by enhancing productive ribosome interactions with the outer mitochondrial membrane and blocks the inappropriate interaction of ribosomes translating non-secretory nascent polypeptides with translocation sites in the membrane of the endoplasmic reticulum. Egd2 may also be involved in transcription regulation. The polypeptide is Nascent polypeptide-associated complex subunit alpha (egd2) (Aspergillus niger (strain ATCC MYA-4892 / CBS 513.88 / FGSC A1513)).